A 712-amino-acid polypeptide reads, in one-letter code: Interleukin-1 receptor-associated kinase 1 (712 aa).

The region spanning 27-106 (MCRFYKVMDA…DIITAWHPPA (80 aa)) is the Death domain. Residue Thr-66 is modified to Phosphothreonine; by PKC/PRKCI. The tract at residues 105 to 187 (PAPLPSPGTT…STKPGPESSV (83 aa)) is disordered. The proST region stretch occupies residues 110–211 (SPGTTAPRPS…LCEISRGTHN (102 aa)). The segment covering 115–133 (APRPSSIPAPAEAEAWSPR) has biased composition (low complexity). Residue Ser-131 is modified to Phosphoserine. A Glycyl lysine isopeptide (Lys-Gly) (interchain with G-Cter in ubiquitin) cross-link involves residue Lys-134. Residues 137–154 (SSASTFLSPAFPGSQTHS) are compositionally biased toward polar residues. A Glycyl lysine isopeptide (Lys-Gly) (interchain with G-Cter in ubiquitin) cross-link involves residue Lys-180. Thr-209 bears the Phosphothreonine; by IRAK4 mark. The Protein kinase domain maps to 212–521 (FSEELKIGEG…TQVYERLEKL (310 aa)). Residues 218 to 226 (IGEGGFGCV) and Lys-239 contribute to the ATP site. The Proton acceptor role is filled by Asp-340. Residues 342 to 345 (KSSN) and Asp-358 contribute to the ATP site. Phosphoserine is present on residues Ser-371 and Ser-375. Thr-387 carries the phosphothreonine modification. 3 disordered regions span residues 532–591 (SEAA…SDES), 613–660 (APLR…PPQI), and 690–712 (SSLP…EFQS). Residues 543–553 (QENSYVSSTGR) are compositionally biased toward polar residues. Ser-556 is modified (phosphoserine). Composition is skewed to low complexity over residues 562–575 (QPLA…AQAA) and 643–658 (EGLA…SEPP).

The protein belongs to the protein kinase superfamily. TKL Ser/Thr protein kinase family. Pelle subfamily. Homodimer. Forms a complex with TRAF6, PELI1, IRAK4 and MYD88. Direct binding of SMAD6 to PELI1 prevents complex formation and hence negatively regulates IL1R-TLR signaling and eventually NF-kappa-B-mediated gene expression. The TRAF6-PELI1-IRAK4-MYD88 complex recruits MAP3K7/TAK1, TAB1 and TAB2 to mediate NF-kappa-B activation. Interaction with MYD88 recruits IRAK1 to the stimulated receptor complex. Interacts with TOLLIP; this interaction occurs in the cytosol prior to receptor activation. Interacts with IL1RL1. Interacts with PELI1 and TRAF6. Interacts (when polyubiquitinated) with IKBKG/NEMO. Interacts with RSAD2/viperin. Interacts with IRAK1BP1. Interacts with PELI2. Interacts with ZC3H12A; this interaction increases the interaction between ZC3H12A and IKBKB/IKKB. Interacts with IRAK4. Interacts with PELI3. Interacts with INAVA; the interaction takes place upon PRR stimulation. Interacts (via C-terminus) with NFATC4 (via N-terminus). In terms of assembly, (Microbial infection) Interacts with mumps virus protein SH; this interaction inhibits downstream NF-kappa-B pathway activation. As to quaternary structure, (Microbial infection) Interacts with alphaviruses SINV, CHIKV, RRV, VEEV and EEEV capsid proteins; the interactions lead to inhibition of IRAK1-dependent signaling. It depends on Mg(2+) as a cofactor. Post-translationally, following recruitment on the activated receptor complex, phosphorylated on Thr-209, probably by IRAK4, resulting in a conformational change of the kinase domain, allowing further phosphorylations to take place. Thr-387 phosphorylation in the activation loop is required to achieve full enzymatic activity. In terms of processing, polyubiquitinated by TRAF6 after cell stimulation with IL-1-beta by PELI1, PELI2 and PELI3. Polyubiquitination occurs with polyubiquitin chains linked through 'Lys-63'. Ubiquitination promotes interaction with NEMO/IKBKG. Also sumoylated; leading to nuclear translocation. Isoform 1 and isoform 2 are ubiquitously expressed in all tissues examined, with isoform 1 being more strongly expressed than isoform 2.

The protein resides in the cytoplasm. It localises to the nucleus. It is found in the lipid droplet. It carries out the reaction L-seryl-[protein] + ATP = O-phospho-L-seryl-[protein] + ADP + H(+). It catalyses the reaction L-threonyl-[protein] + ATP = O-phospho-L-threonyl-[protein] + ADP + H(+). Functionally, serine/threonine-protein kinase that plays a critical role in initiating innate immune response against foreign pathogens. Involved in Toll-like receptor (TLR) and IL-1R signaling pathways. Is rapidly recruited by MYD88 to the receptor-signaling complex upon TLR activation. Association with MYD88 leads to IRAK1 phosphorylation by IRAK4 and subsequent autophosphorylation and kinase activation. Phosphorylates E3 ubiquitin ligases Pellino proteins (PELI1, PELI2 and PELI3) to promote pellino-mediated polyubiquitination of IRAK1. Then, the ubiquitin-binding domain of IKBKG/NEMO binds to polyubiquitinated IRAK1 bringing together the IRAK1-MAP3K7/TAK1-TRAF6 complex and the NEMO-IKKA-IKKB complex. In turn, MAP3K7/TAK1 activates IKKs (CHUK/IKKA and IKBKB/IKKB) leading to NF-kappa-B nuclear translocation and activation. Alternatively, phosphorylates TIRAP to promote its ubiquitination and subsequent degradation. Phosphorylates the interferon regulatory factor 7 (IRF7) to induce its activation and translocation to the nucleus, resulting in transcriptional activation of type I IFN genes, which drive the cell in an antiviral state. When sumoylated, translocates to the nucleus and phosphorylates STAT3. The chain is Interleukin-1 receptor-associated kinase 1 from Homo sapiens (Human).